Reading from the N-terminus, the 393-residue chain is Methylthioribose kinase (393 aa).

ATP contacts are provided by residues Asn-38, Lys-53, and 107–109 (EDL). Asp-225 contacts substrate. 242 to 244 (DPE) contacts ATP. Position 332 (Arg-332) interacts with substrate.

This sequence belongs to the methylthioribose kinase family. Homodimer.

It catalyses the reaction 5-(methylsulfanyl)-D-ribose + ATP = 5-(methylsulfanyl)-alpha-D-ribose 1-phosphate + ADP + H(+). Its pathway is amino-acid biosynthesis; L-methionine biosynthesis via salvage pathway; S-methyl-5-thio-alpha-D-ribose 1-phosphate from S-methyl-5'-thioadenosine (hydrolase route): step 2/2. In terms of biological role, catalyzes the phosphorylation of methylthioribose into methylthioribose-1-phosphate. This Bacillus cereus (strain AH820) protein is Methylthioribose kinase.